The sequence spans 327 residues: Phenylalanine--tRNA ligase alpha subunit (327 aa).

Glutamate 252 is a binding site for Mg(2+).

Belongs to the class-II aminoacyl-tRNA synthetase family. Phe-tRNA synthetase alpha subunit type 1 subfamily. In terms of assembly, tetramer of two alpha and two beta subunits. It depends on Mg(2+) as a cofactor.

It localises to the cytoplasm. The catalysed reaction is tRNA(Phe) + L-phenylalanine + ATP = L-phenylalanyl-tRNA(Phe) + AMP + diphosphate + H(+). The sequence is that of Phenylalanine--tRNA ligase alpha subunit from Erwinia tasmaniensis (strain DSM 17950 / CFBP 7177 / CIP 109463 / NCPPB 4357 / Et1/99).